A 221-amino-acid chain; its full sequence is Cyclin-U3-1 (221 aa).

This sequence belongs to the cyclin family. Cyclin U/P subfamily. In terms of assembly, interacts with CDKA-1 and CDKB1-1. As to expression, expressed in roots, stems and flowers. Expressed in the shoot apex, leaf primordia and young leaves.

The protein is Cyclin-U3-1 (CYCU3-1) of Arabidopsis thaliana (Mouse-ear cress).